We begin with the raw amino-acid sequence, 1218 residues long: Coatomer subunit alpha-2 (1218 aa).

WD repeat units lie at residues 7-48, 49-88, 91-132, 133-172, 202-241, 246-285, 288-326, and 363-404; these read TKSN…DRFD, EHEG…CLFT, GHLD…SVLT, GHNH…KKSA, GHDR…AWEV, GHMN…GIQT, REHD…PAFA, and SLNQ…VGRS. The disordered stretch occupies residues 826 to 849; sequence NRGAVDEEEEDVEGDWGEGLDKFD. Residues 831-843 are compositionally biased toward acidic residues; that stretch reads DEEEEDVEGDWGE.

In terms of assembly, oligomeric complex that consists of at least the alpha, beta, beta', gamma, delta, epsilon and zeta subunits.

The protein localises to the cytoplasm. Its subcellular location is the golgi apparatus membrane. It localises to the cytoplasmic vesicle. It is found in the COPI-coated vesicle membrane. The coatomer is a cytosolic protein complex that binds to dilysine motifs and reversibly associates with Golgi non-clathrin-coated vesicles, which further mediate biosynthetic protein transport from the ER, via the Golgi up to the trans Golgi network. Coatomer complex is required for budding from Golgi membranes, and is essential for the retrograde Golgi-to-ER transport of dilysine-tagged proteins. This Arabidopsis thaliana (Mouse-ear cress) protein is Coatomer subunit alpha-2.